The following is a 498-amino-acid chain: Aldehyde dehydrogenase, mitochondrial (498 aa).

The transit peptide at 1-9 (MLRATLARL) directs the protein to the mitochondrion. Position 242–247 (242–247 (GSTAVG)) interacts with NAD(+). Glu-265 serves as the catalytic Proton acceptor. Cys-299 (nucleophile) is an active-site residue.

It belongs to the aldehyde dehydrogenase family.

The protein localises to the mitochondrion. It catalyses the reaction an aldehyde + NAD(+) + H2O = a carboxylate + NADH + 2 H(+). Its pathway is alcohol metabolism; ethanol degradation; acetate from ethanol: step 2/2. In terms of biological role, could have an RNA-binding activity in addition of its catalytic role. This chain is Aldehyde dehydrogenase, mitochondrial (ALDH2), found in Leishmania tarentolae (Sauroleishmania tarentolae).